We begin with the raw amino-acid sequence, 504 residues long: MKCTVTAKESGLVNADILVQFFSKKEMKRDAGKVLAGLGVVASPDGDFKASAGEIAMLYRQASGKEASRVILAGVGEGKTAEDYRKAADSVARKTVDLHLGVLALDCSPIDDWAKQSKQKPEELAAILVEGVLSGAYRFDRLKSGKLDKEETKEDKPKNIEELVLAGCGSRLEAIEKGAGKGMIIGACQNRARDLVNLPGNHLSAEDLAEAAIEAGKRGGFEVTVFDKKKIVELGMGGLLAVNKGSEQPPTFVILDYKPKGKAKKTIALVGKGVTFDSGGISLKPAQGMDEMKSDMSGAAVVIAAIEAAASLGLPLRVVGLVPATDNMPGGSAQKPGDVITTMSGITVEVGNTDAEGRLILADALFYAKKEYNPDVIIDLATLTGACIVALGNSVAGLFSNDEKLAESIFEAGQSSGEKVWRLPLWDEYDELIKSDVADVHNTGGRGAGTITAAKFLEKFIDGHKHWAHIDIAGPAFWAKGGSKTPGATGFGVRLLLDLLKGWS.

2 residues coordinate Mn(2+): Lys-272 and Asp-277. Lys-284 is an active-site residue. Positions 295, 354, and 356 each coordinate Mn(2+). Arg-358 is an active-site residue.

Belongs to the peptidase M17 family. Mn(2+) is required as a cofactor.

It localises to the cytoplasm. It carries out the reaction Release of an N-terminal amino acid, Xaa-|-Yaa-, in which Xaa is preferably Leu, but may be other amino acids including Pro although not Arg or Lys, and Yaa may be Pro. Amino acid amides and methyl esters are also readily hydrolyzed, but rates on arylamides are exceedingly low.. It catalyses the reaction Release of an N-terminal amino acid, preferentially leucine, but not glutamic or aspartic acids.. Functionally, presumably involved in the processing and regular turnover of intracellular proteins. Catalyzes the removal of unsubstituted N-terminal amino acids from various peptides. This Chlorobaculum tepidum (strain ATCC 49652 / DSM 12025 / NBRC 103806 / TLS) (Chlorobium tepidum) protein is Probable cytosol aminopeptidase.